The sequence spans 1147 residues: Tip elongation aberrant protein 1 (1147 aa).

Positions M1–T16 are enriched in basic residues. The disordered stretch occupies residues M1–S64. Positions P18–L32 are enriched in polar residues. 6 Kelch repeats span residues E94 to N144, F146 to S198, K199 to D253, K254 to G303, L305 to C351, and T355 to T402. Disordered regions lie at residues S384–G403 and S408–S547. Polar residues-rich tracts occupy residues V385–G403, S408–L465, and T472–H489. A compositionally biased stretch (low complexity) spans S502–Q512. Position 503 is a phosphoserine (S503). Residues V519 to S547 are compositionally biased toward polar residues. Residues S538–N1147 are interaction with tea4. Coiled-coil stretches lie at residues K611–V649, Q716–A838, K879–E990, and I1084–K1105. The retention at microtubule cell ends stretch occupies residues K948 to N1147.

As to quaternary structure, major component of the tea1 cell-end complex. Interacts with rax2, tea4 and tip1. Interacts with for3 in the presence of tea4.

The protein localises to the cytoplasm. The protein resides in the cytoskeleton. Its function is as follows. Cell polarity protein. Acts as an end marker, directing the growth machinery to the cell poles. Involved in the regulation of microtubular organization, affecting the maintenance of a single central axis. Prevents the curling of microtubule tips around the cell ends and is required for the retention of polarity factors such as pom1, tip1 and tea2 at the cell ends, necessary for the cell to grow in a straight line. Links tip1 and tea4 in a common complex. The polypeptide is Tip elongation aberrant protein 1 (tea1) (Schizosaccharomyces pombe (strain 972 / ATCC 24843) (Fission yeast)).